Reading from the N-terminus, the 201-residue chain is ATP-dependent Clp protease proteolytic subunit 2 (201 aa).

Residue S101 is the Nucleophile of the active site. Residue H126 is part of the active site.

It belongs to the peptidase S14 family. As to quaternary structure, fourteen ClpP subunits assemble into 2 heptameric rings which stack back to back to give a disk-like structure with a central cavity, resembling the structure of eukaryotic proteasomes.

The protein resides in the cytoplasm. The enzyme catalyses Hydrolysis of proteins to small peptides in the presence of ATP and magnesium. alpha-casein is the usual test substrate. In the absence of ATP, only oligopeptides shorter than five residues are hydrolyzed (such as succinyl-Leu-Tyr-|-NHMec, and Leu-Tyr-Leu-|-Tyr-Trp, in which cleavage of the -Tyr-|-Leu- and -Tyr-|-Trp bonds also occurs).. In terms of biological role, cleaves peptides in various proteins in a process that requires ATP hydrolysis. Has a chymotrypsin-like activity. Plays a major role in the degradation of misfolded proteins. The chain is ATP-dependent Clp protease proteolytic subunit 2 from Prochlorococcus marinus subsp. pastoris (strain CCMP1986 / NIES-2087 / MED4).